The chain runs to 311 residues: Aspartate carbamoyltransferase catalytic subunit (311 aa).

Residues R55 and T56 each coordinate carbamoyl phosphate. K85 contributes to the L-aspartate binding site. R106, H135, and Q138 together coordinate carbamoyl phosphate. L-aspartate contacts are provided by R168 and R230. The carbamoyl phosphate site is built by L268 and P269.

It belongs to the aspartate/ornithine carbamoyltransferase superfamily. ATCase family. Heterododecamer (2C3:3R2) of six catalytic PyrB chains organized as two trimers (C3), and six regulatory PyrI chains organized as three dimers (R2).

The catalysed reaction is carbamoyl phosphate + L-aspartate = N-carbamoyl-L-aspartate + phosphate + H(+). It functions in the pathway pyrimidine metabolism; UMP biosynthesis via de novo pathway; (S)-dihydroorotate from bicarbonate: step 2/3. In terms of biological role, catalyzes the condensation of carbamoyl phosphate and aspartate to form carbamoyl aspartate and inorganic phosphate, the committed step in the de novo pyrimidine nucleotide biosynthesis pathway. The chain is Aspartate carbamoyltransferase catalytic subunit from Citrobacter koseri (strain ATCC BAA-895 / CDC 4225-83 / SGSC4696).